Consider the following 228-residue polypeptide: MDGGLTALQERLKHSFSDTRLLQLALTHRSFSADHNERLEFLGDSVLNLAVSHLLYTRLSALPEGDLSRVRANLVKQDTLHRLALELQLSPLLRLGEGEARSGGPNRPSILADALEALIGAVYLDAGFSAAEALVRRLYESVEINPRMDAVAKDPKTELQEWLQGHKMKLPVYRVAATLGAAHKQTFDVECEVPELGLRERGIGGSRRAGEQAAAAAMLIRLKARGAA.

The RNase III domain occupies 5–127 (LTALQERLKH…LIGAVYLDAG (123 aa)). Glu40 contributes to the Mg(2+) binding site. Asp44 is an active-site residue. Mg(2+)-binding residues include Asp113 and Glu116. Residue Glu116 is part of the active site. A DRBM domain is found at 154–224 (DPKTELQEWL…AAAMLIRLKA (71 aa)).

The protein belongs to the ribonuclease III family. Homodimer. The cofactor is Mg(2+).

The protein localises to the cytoplasm. The enzyme catalyses Endonucleolytic cleavage to 5'-phosphomonoester.. In terms of biological role, digests double-stranded RNA. Involved in the processing of primary rRNA transcript to yield the immediate precursors to the large and small rRNAs (23S and 16S). Processes some mRNAs, and tRNAs when they are encoded in the rRNA operon. Processes pre-crRNA and tracrRNA of type II CRISPR loci if present in the organism. The polypeptide is Ribonuclease 3 (Variovorax paradoxus (strain S110)).